We begin with the raw amino-acid sequence, 500 residues long: NF-kappa-B inhibitor epsilon (500 aa).

Basic and acidic residues predominate over residues M1–P10. Disordered regions lie at residues M1–A66, L84–S215, and S222–V241. A phosphoserine mark is found at S157, S161, and S183. Positions S161 to P186 are enriched in low complexity. Residues E196–D209 are compositionally biased toward basic and acidic residues. 6 ANK repeats span residues D258 to N291, L293 to L322, H326 to R355, Q369 to V398, S403 to A432, and N436 to L465.

This sequence belongs to the NF-kappa-B inhibitor family. In terms of assembly, interacts with RELA, REL, NFKB1 nuclear factor NF-kappa-B p50 subunit and NFKB2 nuclear factor NF-kappa-B p52 subunit. Interacts with HNRNPA2B1; the interaction may be mediated by the RRM2 domain of HNRNPA2B1, and HNRNPA2B1 may interact simultaneously with FAM76B and either NFKBIA or NFKBIE to form a complex. In terms of processing, serine phosphorylated; followed by proteasome-dependent degradation. In terms of tissue distribution, highly expressed in spleen, testis and lung, followed by kidney, pancreas, heart, placenta and brain. Also expressed in granulocytes and macrophages.

Its subcellular location is the cytoplasm. Sequesters NF-kappa-B transcription factor complexes in the cytoplasm, thereby inhibiting their activity. Sequestered complexes include NFKB1-RELA (p50-p65) and NFKB1-REL (p50-c-Rel) complexes. Limits B-cell activation in response to pathogens, and also plays an important role in B-cell development. This is NF-kappa-B inhibitor epsilon (NFKBIE) from Homo sapiens (Human).